A 409-amino-acid polypeptide reads, in one-letter code: uncharacterized protein (409 aa).

Disordered regions lie at residues Glu-12–Pro-32, Glu-133–Gln-160, and Thr-194–Thr-213. Polar residues predominate over residues Val-134–Gln-160.

This is an uncharacterized protein from Mus musculus (Mouse).